The primary structure comprises 125 residues: Small ribosomal subunit protein uS11 (125 aa).

Residues 101 to 125 (KDVKDVTPTPHNGTRPPKKILKREK) are disordered. A compositionally biased stretch (basic residues) spans 116-125 (PPKKILKREK).

This sequence belongs to the universal ribosomal protein uS11 family. As to quaternary structure, part of the 30S ribosomal subunit. Interacts with proteins S7 and S18. Binds to IF-3.

Its function is as follows. Located on the platform of the 30S subunit, it bridges several disparate RNA helices of the 16S rRNA. Forms part of the Shine-Dalgarno cleft in the 70S ribosome. The protein is Small ribosomal subunit protein uS11 of Mycoplasma sp.